The following is a 291-amino-acid chain: MASSKKVTLSVLSREQSEGVGARVRRSIGGPELKMLDPFLLFDEFKGGRPGGFPDHPHRGFETVSYLLEGGSMAHEDFCGHVGKMNPGDLQWMTAGRGILHAEMPCSEEPAHGLQLWVNLKRSEKMVEPQYQELKSEEIPKPSKDGVTVAVISGEALGIKSKVYTRTPTLYLDFKLDQGAKHSQPIPKGWTSFIYTISGDVYIGPDDAQQKIEPHRTAVLGEGDTVQLENKDPKRSHFVLIAGEPLREPVVQHGPFVMNTNEEISEAILDFRNAKNGFEGAKTWKSKIGNQ.

The Fe cation site is built by histidine 56, histidine 58, histidine 101, and glutamate 103.

It belongs to the pirin family. In terms of assembly, may interact with NF1/CTF1. Interacts with BCL3. Identified in a complex comprised of PIR, BLC3, NFKB1 and target DNA. Requires Fe cation as cofactor.

Its subcellular location is the nucleus. It localises to the cytoplasm. It carries out the reaction quercetin + O2 = 2-(3,4-dihydroxybenzoyloxy)-4,6-dihydroxybenzoate + CO. It participates in flavonoid metabolism; quercetin degradation. In terms of biological role, transcriptional coregulator of NF-kappa-B which facilitates binding of NF-kappa-B proteins to target kappa-B genes in a redox-state-dependent manner. May be required for efficient terminal myeloid maturation of hematopoietic cells. Has quercetin 2,3-dioxygenase activity (in vitro). In Rattus norvegicus (Rat), this protein is Pirin (Pir).